We begin with the raw amino-acid sequence, 145 residues long: Hemoglobin subunit beta (145 aa).

The region spanning 1-145 (MLTAEEKAAV…VANALAHRYH (145 aa)) is the Globin domain. Thr11 carries the post-translational modification Phosphothreonine. Position 43 is a phosphoserine (Ser43). The residue at position 58 (Lys58) is an N6-acetyllysine. Residue His62 participates in heme b binding. Lys81 is modified (N6-acetyllysine). His91 is a heme b binding site. Cys92 bears the S-nitrosocysteine mark.

The protein belongs to the globin family. As to quaternary structure, heterotetramer of two alpha chains and two beta chains. Red blood cells.

In terms of biological role, involved in oxygen transport from the lung to the various peripheral tissues. This is Hemoglobin subunit beta (HBB) from Bos gaurus frontalis (Domestic gayal).